Consider the following 511-residue polypeptide: UDP-N-acetylmuramate--L-alanine ligase (511 aa).

127–133 (GTHGKTT) provides a ligand contact to ATP. Residues 481-511 (VGTVPGGEVGGATTIGGTVPGGSAPGASAAG) are disordered. The segment covering 484–504 (VPGGEVGGATTIGGTVPGGSA) has biased composition (gly residues).

Belongs to the MurCDEF family.

It localises to the cytoplasm. The catalysed reaction is UDP-N-acetyl-alpha-D-muramate + L-alanine + ATP = UDP-N-acetyl-alpha-D-muramoyl-L-alanine + ADP + phosphate + H(+). It functions in the pathway cell wall biogenesis; peptidoglycan biosynthesis. Its function is as follows. Cell wall formation. The protein is UDP-N-acetylmuramate--L-alanine ligase of Salinispora arenicola (strain CNS-205).